Reading from the N-terminus, the 394-residue chain is GDP-mannose transporter (394 aa).

The Cytoplasmic segment spans residues 1 to 56 (MSNKKNEDIEMRAVEGANDFGGEKDPFLGRNSPVLRPRGREPTASAYFGKLDNSPG). The chain crosses the membrane as a helical span at residues 57 to 77 (ASIIAYCLSSISMTVVNKYVV). The Lumenal portion of the chain corresponds to 78–81 (SGES). A helical membrane pass occupies residues 82-102 (WNLNFFYLGVQSLVCTIAILL). Topologically, residues 103–122 (SRQTGLIKNLAPFDSNKAKR) are cytoplasmic. Residues 123–145 (WFPVSLLLVSMIYTGANALQYLS) form a helical membrane-spanning segment. The Lumenal segment spans residues 146 to 150 (VPVYT). The helical transmembrane segment at 151-168 (IFKNLTIIVIAYGEVLWF) threads the bilayer. Residues 169–174 (GGSVTP) lie on the Cytoplasmic side of the membrane. A helical membrane pass occupies residues 175-199 (LMLLSFGLMVLSSVVAAWADIQAAI). The Lumenal portion of the chain corresponds to 200-207 (DGVGHSAE). A helical transmembrane segment spans residues 208-228 (TSAALATLNAGYAWMGLNVVC). Residues 229-249 (TSSYLLGMRKVIKKMNFKDYD) are Cytoplasmic-facing. A helical transmembrane segment spans residues 250-270 (SMFYNNLLTIPVLVVCSLLVE). Residues 271-288 (DWSSENLAKNFPIETRNK) are Lumenal-facing. A helical membrane pass occupies residues 289 to 309 (LMVGMIYSGLAAIFISYCSAW). The Cytoplasmic segment spans residues 310-317 (CIRVTSST). A helical membrane pass occupies residues 318 to 338 (TYSMVGALNKLPIAISGLIFF). The Lumenal segment spans residues 339-341 (DAP). The chain crosses the membrane as a helical span at residues 342–362 (ITFGSITAIAVGFVSGLVFAW). Residues 363–394 (AKVRQKAQEAGLLPTTKPTMSASAQSNRDANS) are Cytoplasmic-facing.

This sequence belongs to the TPT transporter family. SLC35D subfamily. In terms of assembly, homooligomer.

The protein localises to the golgi apparatus membrane. The protein resides in the cytoplasmic vesicle membrane. It localises to the endoplasmic reticulum membrane. In terms of biological role, involved in the import of GDP-mannose from the cytoplasm into the Golgi lumen. This is GDP-mannose transporter (VRG4) from Chaetomium globosum (strain ATCC 6205 / CBS 148.51 / DSM 1962 / NBRC 6347 / NRRL 1970) (Soil fungus).